The sequence spans 149 residues: Small heat shock protein IbpB (149 aa).

The 112-residue stretch at 26 to 137 folds into the sHSP domain; it reads SQEPIDFPPY…QPQRIAIGGG (112 aa).

Belongs to the small heat shock protein (HSP20) family. In terms of assembly, homodimer. Forms homomultimers of about 100-150 subunits at optimal growth temperatures. Conformation changes to oligomers at high temperatures or high ionic concentrations. The decrease in size of the multimers is accompanied by an increase in chaperone activity.

It is found in the cytoplasm. Associates with aggregated proteins, together with IbpA, to stabilize and protect them from irreversible denaturation and extensive proteolysis during heat shock and oxidative stress. Aggregated proteins bound to the IbpAB complex are more efficiently refolded and reactivated by the ATP-dependent chaperone systems ClpB and DnaK/DnaJ/GrpE. Its activity is ATP-independent. In Pectobacterium carotovorum subsp. carotovorum (strain PC1), this protein is Small heat shock protein IbpB.